The following is a 513-amino-acid chain: GMP synthase [glutamine-hydrolyzing] (513 aa).

Residues 3-200 (SVLVLDFGSQ…LLNIAGITPD (198 aa)) enclose the Glutamine amidotransferase type-1 domain. Cys-80 (nucleophile) is an active-site residue. Active-site residues include His-174 and Glu-176. Positions 201–388 (WSSKSFIDHQ…LGIAEDILMR (188 aa)) constitute a GMPS ATP-PPase domain. An ATP-binding site is contributed by 228–234 (SGGVDST).

In terms of assembly, homodimer.

It catalyses the reaction XMP + L-glutamine + ATP + H2O = GMP + L-glutamate + AMP + diphosphate + 2 H(+). It functions in the pathway purine metabolism; GMP biosynthesis; GMP from XMP (L-Gln route): step 1/1. In terms of biological role, catalyzes the synthesis of GMP from XMP. The chain is GMP synthase [glutamine-hydrolyzing] from Chlorobium phaeovibrioides (strain DSM 265 / 1930) (Prosthecochloris vibrioformis (strain DSM 265)).